The primary structure comprises 304 residues: tRNA dimethylallyltransferase (304 aa).

13–20 is a binding site for ATP; that stretch reads GPTAAGKT. 15–20 provides a ligand contact to substrate; it reads TAAGKT. The segment at 38–41 is interaction with substrate tRNA; that stretch reads DSRQ.

The protein belongs to the IPP transferase family. As to quaternary structure, monomer. The cofactor is Mg(2+).

It catalyses the reaction adenosine(37) in tRNA + dimethylallyl diphosphate = N(6)-dimethylallyladenosine(37) in tRNA + diphosphate. Catalyzes the transfer of a dimethylallyl group onto the adenine at position 37 in tRNAs that read codons beginning with uridine, leading to the formation of N6-(dimethylallyl)adenosine (i(6)A). In Cytophaga hutchinsonii (strain ATCC 33406 / DSM 1761 / CIP 103989 / NBRC 15051 / NCIMB 9469 / D465), this protein is tRNA dimethylallyltransferase.